The sequence spans 97 residues: Nucleoid-associated protein HPAG1_0033 (97 aa).

Belongs to the YbaB/EbfC family. Homodimer.

The protein resides in the cytoplasm. The protein localises to the nucleoid. Binds to DNA and alters its conformation. May be involved in regulation of gene expression, nucleoid organization and DNA protection. The sequence is that of Nucleoid-associated protein HPAG1_0033 from Helicobacter pylori (strain HPAG1).